A 182-amino-acid polypeptide reads, in one-letter code: UPF0397 protein VS_II0189 (182 aa).

Helical transmembrane passes span 8-28, 41-61, 72-92, 110-130, and 146-166; these read VVVI…MFGV, AVLA…VGFI, WGVW…IGLF, FALF…SSAF, and QLSI…FLIL.

It belongs to the UPF0397 family.

It localises to the cell membrane. This Vibrio atlanticus (strain LGP32) (Vibrio splendidus (strain Mel32)) protein is UPF0397 protein VS_II0189.